The following is a 1082-amino-acid chain: DNA-directed RNA polymerase subunit beta (1082 aa).

It belongs to the RNA polymerase beta chain family. In plastids the minimal PEP RNA polymerase catalytic core is composed of four subunits: alpha, beta, beta', and beta''. When a (nuclear-encoded) sigma factor is associated with the core the holoenzyme is formed, which can initiate transcription.

The protein localises to the plastid. The protein resides in the chloroplast. It carries out the reaction RNA(n) + a ribonucleoside 5'-triphosphate = RNA(n+1) + diphosphate. Its function is as follows. DNA-dependent RNA polymerase catalyzes the transcription of DNA into RNA using the four ribonucleoside triphosphates as substrates. This chain is DNA-directed RNA polymerase subunit beta, found in Euglena gracilis.